Reading from the N-terminus, the 250-residue chain is MINLKIEENVKESQNVNTLYFNWDQDIRPGQFAMIWIPGYGEIPMSFSGLGRRKSITVKAYGSASRKLTELKAGDDLFLRGPYGNGFDVREGRKLLVGGGSGIVSLYPIADQETDALISAKTRDELIFKDRFPESRRFIATDDGSDGFHGFAHELLQRINIDSYEAIYVCGPEQMMYKVLQVLKGRKVFVQFSLERTMKCGIGICDSCSLGGKQVCKEGPVFNIEELIGNPEFGVYRTTYSGRRIRLNVK.

Positions 1-89 (MINLKIEENV…RGPYGNGFDV (89 aa)) constitute an FAD-binding FR-type domain. The [2Fe-2S] cluster site is built by Cys-200, Cys-205, Cys-208, and Cys-216.

This sequence belongs to the PyrK family. As to quaternary structure, heterotetramer of 2 PyrK and 2 PyrD type B subunits. It depends on [2Fe-2S] cluster as a cofactor. FAD is required as a cofactor.

Its pathway is pyrimidine metabolism; UMP biosynthesis via de novo pathway; orotate from (S)-dihydroorotate (NAD(+) route): step 1/1. In terms of biological role, responsible for channeling the electrons from the oxidation of dihydroorotate from the FMN redox center in the PyrD type B subunit to the ultimate electron acceptor NAD(+). The polypeptide is Probable dihydroorotate dehydrogenase B (NAD(+)), electron transfer subunit (Thermoplasma volcanium (strain ATCC 51530 / DSM 4299 / JCM 9571 / NBRC 15438 / GSS1)).